Reading from the N-terminus, the 211-residue chain is MQPRVVILDYGSGNLRSAQRAVARVGAHATISSDPHTALEADGLVVPGVGAFAACMRGLRALRGDRVIGKRLAGGRPVLGICVGMQILFERGVENDVVTEGCAEWPGTVERLDAPVIPHMGWNTVDAPAESAMFAGIDKDTRFYFVHSYGVRTWEMQTTSPHLKPPLVTWSTHGTPFVAAVENGPLWATQFHPEKSGDAGAQLLANWVATL.

The Glutamine amidotransferase type-1 domain occupies 4–211; it reads RVVILDYGSG…QLLANWVATL (208 aa). The active-site Nucleophile is the Cys82. Catalysis depends on residues His192 and Glu194.

As to quaternary structure, heterodimer of HisH and HisF.

The protein localises to the cytoplasm. The catalysed reaction is 5-[(5-phospho-1-deoxy-D-ribulos-1-ylimino)methylamino]-1-(5-phospho-beta-D-ribosyl)imidazole-4-carboxamide + L-glutamine = D-erythro-1-(imidazol-4-yl)glycerol 3-phosphate + 5-amino-1-(5-phospho-beta-D-ribosyl)imidazole-4-carboxamide + L-glutamate + H(+). It catalyses the reaction L-glutamine + H2O = L-glutamate + NH4(+). It functions in the pathway amino-acid biosynthesis; L-histidine biosynthesis; L-histidine from 5-phospho-alpha-D-ribose 1-diphosphate: step 5/9. IGPS catalyzes the conversion of PRFAR and glutamine to IGP, AICAR and glutamate. The HisH subunit catalyzes the hydrolysis of glutamine to glutamate and ammonia as part of the synthesis of IGP and AICAR. The resulting ammonia molecule is channeled to the active site of HisF. The sequence is that of Imidazole glycerol phosphate synthase subunit HisH from Thermobifida fusca (strain YX).